The sequence spans 99 residues: C-C motif chemokine 17 (99 aa).

Residues 1 to 23 (MIPLKMLLLVTLLLGASLQVTHA) form the signal peptide. Cystine bridges form between cysteine 33–cysteine 57 and cysteine 34–cysteine 73.

The protein belongs to the intercrine beta (chemokine CC) family. As to expression, expressed in thymus, spleen, lymph node, lung and heart.

It is found in the secreted. In terms of biological role, chemokine, which displays chemotactic activity for T lymphocytes, preferentially Th2 cells, but not monocytes or granulocytes. Therefore plays an important role in a wide range of inflammatory and immunological processes. Acts by binding to CCR4 at T-cell surface. Mediates GM-CSF/CSF2-driven pain and inflammation. In the brain, required to maintain the typical, highly branched morphology of hippocampal microglia under homeostatic conditions. May be important for the appropriate adaptation of microglial morphology and synaptic plasticity to acute lipopolysaccharide (LPS)-induced neuroinflammation. Plays a role in wound healing, mainly by inducing fibroblast migration into the wound. The protein is C-C motif chemokine 17 (CCL17) of Canis lupus familiaris (Dog).